The chain runs to 179 residues: Large ribosomal subunit protein uL6 (179 aa).

The protein belongs to the universal ribosomal protein uL6 family. Part of the 50S ribosomal subunit.

In terms of biological role, this protein binds to the 23S rRNA, and is important in its secondary structure. It is located near the subunit interface in the base of the L7/L12 stalk, and near the tRNA binding site of the peptidyltransferase center. The polypeptide is Large ribosomal subunit protein uL6 (Synechococcus elongatus (strain ATCC 33912 / PCC 7942 / FACHB-805) (Anacystis nidulans R2)).